Consider the following 166-residue polypeptide: Transmembrane protein 190 (166 aa).

The signal sequence occupies residues 1–21; the sequence is MVGSGISALGLLLLMQGSVDA. At 22-81 the chain is on the extracellular side; the sequence is NGIQGFFYPWSCEGDVWDRESCGGQAAIENPNLCLRLRCCYRDGVCYHQRPDENMRRKHM. In terms of domain architecture, P-type spans 31–71; that stretch reads WSCEGDVWDRESCGGQAAIENPNLCLRLRCCYRDGVCYHQR. Intrachain disulfides connect Cys33/Cys61, Cys43/Cys60, and Cys55/Cys67. The chain crosses the membrane as a helical span at residues 82–102; that stretch reads WALGWTCGSLLFLITSICLFW. Residues 103-166 are Cytoplasmic-facing; that stretch reads WARRQDMLHL…VSGEDTGGEE (64 aa). The interval 130-166 is disordered; it reads LSKDRRSANKSTTVLQSPGGEVETAAAVSGEDTGGEE.

In terms of tissue distribution, detected in testis and in a mixture of spermatogenic cells at various stages (testicular germ cells). Not detected in heart, brain, spleen, lung, liver, skeletal muscle and kidney.

It localises to the membrane. The sequence is that of Transmembrane protein 190 (Tmem190) from Mus musculus (Mouse).